The primary structure comprises 123 residues: Heat-labile enterotoxin IIA, B chain (123 aa).

Positions 1–19 (MSSKKIIGAFVLMTGILSG) are cleaved as a signal peptide. Cysteines 33 and 104 form a disulfide.

Heterohexamer of one A chain and of five B chains.

In terms of biological role, the biological activity of the toxin is produced by the A chain, which activates intracellular adenyl cyclase. This is Heat-labile enterotoxin IIA, B chain from Escherichia coli.